Consider the following 1301-residue polypeptide: Zinc finger protein 532 (1301 aa).

Disordered regions lie at residues 26-206 (PKAA…RETE), 223-266 (AEDK…SSSK), and 281-366 (KAAS…IKTI). The segment covering 32 to 52 (SGHDDHESHMKQNAHGEDDSH) has biased composition (basic and acidic residues). Polar residues predominate over residues 84-101 (PTGNGLHNGFLTASSLDS). Positions 102–111 (YSKDGAKSLK) are enriched in basic and acidic residues. Residues 122 to 133 (KDSTFSQFSPIS) show a composition bias toward polar residues. 3 positions are modified to phosphoserine: serine 130, serine 133, and serine 134. Residues 136 to 151 (EEFDDDEKIEVDDPPD) show a composition bias toward acidic residues. The span at 158 to 170 (SFRSNVLTGSAPQ) shows a compositional bias: polar residues. An N6-acetyllysine modification is found at lysine 175. Residues 182–195 (ENSSKTGLSTSGNV) are compositionally biased toward polar residues. Composition is skewed to basic and acidic residues over residues 196 to 206 (EKNKAVKRETE) and 223 to 250 (AEDKLKESSDKVLENRVLDGKLSSEKND). Threonine 205 carries the phosphothreonine modification. Phosphoserine is present on residues serine 252, serine 307, and serine 314. The span at 303-315 (EVNDSPRAADKSP) shows a compositional bias: basic and acidic residues. The segment covering 337-359 (SISSENSSKGSPSSPAGSTPAIP) has biased composition (low complexity). At serine 434 the chain carries Phosphoserine. Glycyl lysine isopeptide (Lys-Gly) (interchain with G-Cter in SUMO2) cross-links involve residues lysine 459 and lysine 516. The C2H2-type 1; degenerate zinc-finger motif lies at 616 to 635 (YKCLECGDSFALEKSLTQHY). The C2H2-type 2; degenerate zinc finger occupies 754-779 (LKCLECNEVFQDETSLATHFQQAADT). C2H2-type zinc fingers lie at residues 783–805 (KTCTICQMLLPNQCSYASHQRIH), 842–865 (FRCVHCNVVYSDVAALKSHIQGSH), 870–893 (YKCPICPMAFKSAPSTHSHAYTQH), 905–927 (YKCSMCDTVFTLQTLLYRHFDQH), and 936–959 (FKCPDCSLLYAQKQLMMDHIKSMH). Lysine 980 is covalently cross-linked (Glycyl lysine isopeptide (Lys-Gly) (interchain with G-Cter in SUMO2)). Residues 983 to 1017 (TQNSANQNKEDTKSMNGKEKLEKKSPSPVKKSMET) form a disordered region. The span at 990–1017 (NKEDTKSMNGKEKLEKKSPSPVKKSMET) shows a compositional bias: basic and acidic residues. 2 consecutive C2H2-type zinc fingers follow at residues 1025 to 1048 (WTCWECDCLFMQRDVYISHVRKEH) and 1055 to 1078 (HPCRQCDKSFSSSHSLCRHNRIKH). Residues 1085–1111 (YACSHCPDSRRTFTKRLMLEKHVQLMH) form a C2H2-type 10; degenerate zinc finger. Phosphoserine is present on serine 1140. Glycyl lysine isopeptide (Lys-Gly) (interchain with G-Cter in SUMO2) cross-links involve residues lysine 1144 and lysine 1167. Residues 1203-1226 (YQCRECGLCYTSHVSLSRHLFIVH) form a C2H2-type 11 zinc finger. The segment at 1230–1263 (EPQPVSKQNGAGEDNQQENKPSHEDESPDGAVSD) is disordered. A C2H2-type 12 zinc finger spans residues 1264–1286 (RKCKVCAKTFETEAALNTHMRTH).

The protein belongs to the krueppel C2H2-type zinc-finger protein family.

The protein resides in the nucleus. Functionally, may be involved in transcriptional regulation. In Homo sapiens (Human), this protein is Zinc finger protein 532 (ZNF532).